The primary structure comprises 410 residues: MTLSFDLTTEGARDALRARAAPEKPSLIGLTRAELGEALVASGIVPERQAKMRAQQLWHWMYVRGVSDFAGMFNISKDLRAELDKHFTVARPEIVEEQISSDGTRKWLFRFPPRGAGRPVEIETVYIPEEGRGTLCISSQVGCTLTCSFCHTGTQKLVRNLTTEEILAQLLTARDRLGDFPDRDTPDGAIVPAEGRKVSNIVMMGMGEPLYNFEAVKKALLIASDGDGLSLSKRRITLSTSGVVPEIFRTGEEIGVMLAISLHATNDDLRDLLVPINKKYPLKELIAACRAYPGLSNAKRITFEYVMLKDVNDSIEDAKGLIKLLKGIPAKINLIPFNPWPGTNYQCSDWETIEKFADYINNAGYASPIRTPRGRDILAACGQLKSESERMRKVDRLALEAMMIAGHGEA.

E123 acts as the Proton acceptor in catalysis. Residues 129–378 (EEGRGTLCIS…IRTPRGRDIL (250 aa)) enclose the Radical SAM core domain. C136 and C381 are joined by a disulfide. 3 residues coordinate [4Fe-4S] cluster: C143, C147, and C150. Residues 207 to 208 (GE), S239, 261 to 263 (SLH), and N338 contribute to the S-adenosyl-L-methionine site. C381 serves as the catalytic S-methylcysteine intermediate.

Belongs to the radical SAM superfamily. RlmN family. It depends on [4Fe-4S] cluster as a cofactor.

It localises to the cytoplasm. It catalyses the reaction adenosine(2503) in 23S rRNA + 2 reduced [2Fe-2S]-[ferredoxin] + 2 S-adenosyl-L-methionine = 2-methyladenosine(2503) in 23S rRNA + 5'-deoxyadenosine + L-methionine + 2 oxidized [2Fe-2S]-[ferredoxin] + S-adenosyl-L-homocysteine. The catalysed reaction is adenosine(37) in tRNA + 2 reduced [2Fe-2S]-[ferredoxin] + 2 S-adenosyl-L-methionine = 2-methyladenosine(37) in tRNA + 5'-deoxyadenosine + L-methionine + 2 oxidized [2Fe-2S]-[ferredoxin] + S-adenosyl-L-homocysteine. Specifically methylates position 2 of adenine 2503 in 23S rRNA and position 2 of adenine 37 in tRNAs. m2A2503 modification seems to play a crucial role in the proofreading step occurring at the peptidyl transferase center and thus would serve to optimize ribosomal fidelity. This chain is Dual-specificity RNA methyltransferase RlmN, found in Mesorhizobium japonicum (strain LMG 29417 / CECT 9101 / MAFF 303099) (Mesorhizobium loti (strain MAFF 303099)).